Consider the following 301-residue polypeptide: Probable serine acetyltransferase 3 (301 aa).

The segment at Ile-280–Asp-301 is disordered.

It belongs to the transferase hexapeptide repeat family. As to quaternary structure, homomultimer.

It carries out the reaction L-serine + acetyl-CoA = O-acetyl-L-serine + CoA. It participates in amino-acid biosynthesis; L-cysteine biosynthesis; L-cysteine from L-serine: step 1/2. The sequence is that of Probable serine acetyltransferase 3 (SAT3) from Oryza sativa subsp. japonica (Rice).